We begin with the raw amino-acid sequence, 199 residues long: Urease accessory protein UreG (199 aa).

Residue 8 to 15 (GPVGSGKT) coordinates GTP.

Belongs to the SIMIBI class G3E GTPase family. UreG subfamily. In terms of assembly, homodimer. UreH, UreF and UreG form a complex that acts as a GTP-hydrolysis-dependent molecular chaperone, activating the urease apoprotein by helping to assemble the nickel containing metallocenter of UreC. The UreE protein probably delivers the nickel.

The protein resides in the cytoplasm. Functionally, facilitates the functional incorporation of the urease nickel metallocenter. This process requires GTP hydrolysis, probably effectuated by UreG. The polypeptide is Urease accessory protein UreG (Helicobacter pylori (strain P12)).